Here is a 654-residue protein sequence, read N- to C-terminus: Protein fem-1 homolog A (654 aa).

7 ANK repeats span residues 2-31, 40-70, 82-111, 115-145, 149-178, 182-211, and 214-243; these read DLHT…REEI, GGGT…SVEA, EGAP…SVNR, TNST…DLEV, HGHT…QVNR, KGNT…RMER, and YGMT…GHGQ. The residue at position 108 (Ser-108) is a Phosphoserine. Residues 241 to 265 are disordered; the sequence is HGQLSGTELPGEGSSQMAGNHCSTP. Polar residues predominate over residues 253–263; the sequence is GSSQMAGNHCS. TPR repeat units follow at residues 283-317 and 375-408; these read VEAL…RHQG and SYYI…QQNN. 2 ANK repeats span residues 519 to 561 and 565 to 594; these read NGFT…DPDS and DNNT…HMDA. Phosphoserine is present on Ser-608.

Belongs to the fem-1 family. Component of a CRL2 E3 ubiquitin-protein ligase complex, also named ECS (Elongin BC-CUL2/5-SOCS-box protein) complex, composed of CUL2, Elongin BC (ELOB and ELOC), RBX1 and substrate-specific adapter FEM1A. Interacts with PTGER4. Interacts with NFKB1; the interaction is direct. In terms of processing, phosphorylated; highly phosphorylated in myoblasts and myotubes. Phosphorylation at Ser-108 and Ser-608 promote PGE2-EP4-mediated inhibition of inflammation. Dephosphorylated by protein phosphatase 2A (PP2A).

It is found in the mitochondrion. Its subcellular location is the cytoplasm. It participates in protein modification; protein ubiquitination. In terms of biological role, substrate-recognition component of a Cul2-RING (CRL2) E3 ubiquitin-protein ligase complex of the DesCEND (destruction via C-end degrons) pathway, which recognizes a C-degron located at the extreme C terminus of target proteins, leading to their ubiquitination and degradation. The C-degron recognized by the DesCEND pathway is usually a motif of less than ten residues and can be present in full-length proteins, truncated proteins or proteolytically cleaved forms. The CRL2(FEM1A) complex specifically recognizes proteins with an arginine at the C-terminus: recognizes and binds proteins ending with -Lys/Arg-Xaa-Arg and -Lys/Arg-Xaa-Xaa-Arg C-degrons, such as SIL1 or OR51B2, leading to their ubiquitination and degradation. Involved in PGE2-EP4-mediated inhibition of inflammation of macrophages via interaction with NFKB1 and PTGER4. Promotes inflammation in brain microglia through MAP2K4/MKK4-mediated signaling. The polypeptide is Protein fem-1 homolog A (Rattus norvegicus (Rat)).